The primary structure comprises 755 residues: Cellulose synthase-like protein B4 (755 aa).

2 consecutive transmembrane segments (helical) span residues 24 to 44 (AVDLTILGLLLSLLLYRILHV) and 49 to 69 (TVWIVAFLCETCFTFVWLLIT). Catalysis depends on residues Asp136 and Asp461. 6 helical membrane passes run 533–556 (AYLYVFSWGLRSIPELFYCLLPAY), 569–589 (VYLGIIITLVGIHCLYTLWEF), 615–635 (LFSVLDVILKLLGISKTVFIV), 674–694 (FLPGTFIVLVNLAALAGCLVG), 702–722 (GSGLAEACGCILVVILFLPFL), and 733–753 (IPFSTLSKAAFLAALFVVLSV).

Belongs to the glycosyltransferase 2 family. Plant cellulose synthase-like B subfamily.

The protein localises to the golgi apparatus membrane. Its function is as follows. Thought to be a Golgi-localized beta-glycan synthase that polymerize the backbones of noncellulosic polysaccharides (hemicelluloses) of plant cell wall. The protein is Cellulose synthase-like protein B4 (CSLB4) of Arabidopsis thaliana (Mouse-ear cress).